Consider the following 218-residue polypeptide: DNA endonuclease I-CeuI (218 aa).

The Mg(2+) site is built by Gly-65 and Glu-66. The interaction with DNA stretch occupies residues Ile-71 to Lys-75. Asp-86 provides a ligand contact to Mg(2+). Interaction with DNA stretches follow at residues Asn-90–His-94, Arg-114–Lys-116, and Lys-191–Gly-199.

This sequence belongs to the LAGLIDADG endonuclease family. Homodimer. It depends on Mg(2+) as a cofactor.

It is found in the plastid. It localises to the chloroplast. Functionally, endonuclease involved in intron homing. Recognizes a degenerate sequence of 17-19 bp to produce a staggered cut 5 bp downstream from the CeLSU.5 intron insertion site. This chain is DNA endonuclease I-CeuI, found in Chlamydomonas moewusii (Chlamydomonas eugametos).